The chain runs to 553 residues: uncharacterized protein (553 aa).

Residues 1–31 form the signal peptide; that stretch reads MEDIMTSLLVATSRVVVTISLAYVPVKSAFA. Ser-207 acts as the Acyl-ester intermediate in catalysis. Cys-275 and Cys-292 are oxidised to a cystine. 5 residues coordinate Ca(2+): Asp-276, Asp-279, Val-281, Asp-283, and Leu-285. Residues Asp-444 and His-482 each act as charge relay system in the active site. Cys-528 and Cys-550 are joined by a disulfide.

The protein belongs to the tannase family.

This is an uncharacterized protein from Agrobacterium fabrum (strain C58 / ATCC 33970) (Agrobacterium tumefaciens (strain C58)).